A 204-amino-acid chain; its full sequence is Ras-related protein RABG1 (204 aa).

A GTP-binding site is contributed by 12–19; the sequence is GDSGVGKT. Residues 34–42 carry the Effector region motif; the sequence is HNSTIYVDL. GTP contacts are provided by residues 60-64, 122-125, and 155-156; these read DTAGQ, NKTD, and SA. Residues Cys202 and Cys204 are each lipidated (S-geranylgeranyl cysteine). A Cysteine methyl ester modification is found at Cys204.

The protein belongs to the small GTPase superfamily. Rab family.

The protein localises to the cell membrane. Functionally, intracellular vesicle trafficking and protein transport. The polypeptide is Ras-related protein RABG1 (RABG1) (Arabidopsis thaliana (Mouse-ear cress)).